The chain runs to 66 residues: Large ribosomal subunit protein uL29 (66 aa).

Belongs to the universal ribosomal protein uL29 family.

The chain is Large ribosomal subunit protein uL29 from Kosmotoga olearia (strain ATCC BAA-1733 / DSM 21960 / TBF 19.5.1).